Consider the following 119-residue polypeptide: Ribosome-binding factor A (119 aa).

The protein belongs to the RbfA family. Monomer. Binds 30S ribosomal subunits, but not 50S ribosomal subunits or 70S ribosomes.

Its subcellular location is the cytoplasm. One of several proteins that assist in the late maturation steps of the functional core of the 30S ribosomal subunit. Associates with free 30S ribosomal subunits (but not with 30S subunits that are part of 70S ribosomes or polysomes). Required for efficient processing of 16S rRNA. May interact with the 5'-terminal helix region of 16S rRNA. This is Ribosome-binding factor A from Buchnera aphidicola subsp. Baizongia pistaciae (strain Bp).